Consider the following 432-residue polypeptide: 5'-deoxyadenosine deaminase (432 aa).

2 residues coordinate Zn(2+): His63 and His65. 2 residues coordinate substrate: Glu92 and His184. His211 contacts Zn(2+). The substrate site is built by Glu214 and Asp299. Asp299 is a Zn(2+) binding site.

Belongs to the metallo-dependent hydrolases superfamily. MTA/SAH deaminase family. Homotetramer. Zn(2+) is required as a cofactor.

It carries out the reaction 5'-deoxyadenosine + H2O + H(+) = 5'-deoxyinosine + NH4(+). The catalysed reaction is S-adenosyl-L-homocysteine + H2O + H(+) = S-inosyl-L-homocysteine + NH4(+). It catalyses the reaction S-methyl-5'-thioadenosine + H2O + H(+) = S-methyl-5'-thioinosine + NH4(+). The enzyme catalyses adenosine + H2O + H(+) = inosine + NH4(+). It participates in amino-acid biosynthesis; S-adenosyl-L-methionine biosynthesis. Functionally, catalyzes the deamination of three SAM-derived enzymatic products, namely 5'-deoxyadenosine, S-adenosyl-L-homocysteine, and 5'-methylthioadenosine, to produce the inosine analogs. Can also deaminate adenosine. The preferred substrate for this enzyme is 5'-deoxyadenosine, but all these substrates are efficiently deaminated. Likely functions in a S-adenosyl-L-methionine (SAM) recycling pathway from S-adenosyl-L-homocysteine (SAH) produced from SAM-dependent methylation reactions. May also be involved in the recycling of 5'-deoxyadenosine, whereupon the 5'-deoxyribose moiety of 5'-deoxyinosine is further metabolized to deoxyhexoses used for the biosynthesis of aromatic amino acids in methanogens. The sequence is that of 5'-deoxyadenosine deaminase from Methanosarcina mazei (strain ATCC BAA-159 / DSM 3647 / Goe1 / Go1 / JCM 11833 / OCM 88) (Methanosarcina frisia).